The chain runs to 671 residues: Kinesin-like protein KIF2C (671 aa).

The segment at 1-200 (MIDIDDVAAI…CNPLTVTDPI (200 aa)) is globular. The disordered stretch occupies residues 37–58 (QKRKSVNSKIPGPKEGLRSRST). Ser-41 bears the Phosphoserine; by AURKB mark. The short motif at 44–47 (SKIP) is the Microtubule tip localization signal element. Phosphoserine occurs at positions 55, 57, 61, 112, 121, 133, and 138. The interval 115-138 (AEEQAHSTRSTSSANPGNSVRRKS) is disordered. Polar residues predominate over residues 121–132 (STRSTSSANPGN). A negative regulator of microtubule-binding region spans residues 153–184 (EKRAQNSEIRIKRAQEYDNSFPNWEFARMIKE). The 331-residue stretch at 204-534 (RICVCVRKRP…LRYADRVKEL (331 aa)) folds into the Kinesin motor domain. ATP-binding positions include Arg-210 and 294–301 (GQTGSGKT). Residue Ser-465 is modified to Phosphoserine. A disordered region spans residues 533 to 568 (ELSPHSGPSGEQAVQMETEEMDASSHGASLTGNEEE). A coiled-coil region spans residues 566-601 (EEEELSSQMSSFNEAMTQIRELEERAMEELREIIQQ). Ser-576 is modified (phosphoserine).

It belongs to the TRAFAC class myosin-kinesin ATPase superfamily. Kinesin family. MCAK/KIF2 subfamily. In terms of assembly, interacts with CENPH. Interacts with MTUS2/TIP150; the interaction is direct. Interacts with MAPRE1; the interaction is direct, regulated by phosphorylation and is probably required for targeting to growing microtubule plus ends. Interacts with KIF18B at microtubule tips; this interaction increases the affinity of both partners for microtubule plus ends and is required for robust microtubule depolymerization. Phosphorylation by AURKA or AURKB strongly reduces KIF18B-binding. Phosphorylation by AURKB, regulates association with centromeres and kinetochores and the microtubule depolymerization activity. Post-translationally, ubiquitinated. Testis. Localized to the meiotically active cells of the seminiferous epithelia in the testis.

The protein localises to the cytoplasm. Its subcellular location is the cytoskeleton. It is found in the nucleus. The protein resides in the chromosome. It localises to the centromere. The protein localises to the kinetochore. In complex with KIF18B, constitutes the major microtubule plus-end depolymerizing activity in mitotic cells. Regulates the turnover of microtubules at the kinetochore and functions in chromosome segregation during mitosis. Plays a role in chromosome congression and is required for the lateral to end-on conversion of the chromosome-microtubule attachment. The polypeptide is Kinesin-like protein KIF2C (Kif2c) (Rattus norvegicus (Rat)).